A 284-amino-acid polypeptide reads, in one-letter code: uncharacterized protein (284 aa).

Residues 9–28 (IILRWVVTLYIYGFILYQIT) form a helical membrane-spanning segment.

It localises to the membrane. This is an uncharacterized protein from Aquifex aeolicus (strain VF5).